Here is a 629-residue protein sequence, read N- to C-terminus: Dolichyl-diphosphooligosaccharide--protein glycosyltransferase subunit 2 (629 aa).

A signal peptide spans 1 to 22; sequence MAPPGSRTVLLLALTIIARTQA. Over 23–541 the chain is Lumenal; that stretch reads LKPTHYLTKH…RDPEKRPPTV (519 aa). Asn106 carries N-linked (GlcNAc...) asparagine glycosylation. A Glycyl lysine isopeptide (Lys-Gly) (interchain with G-Cter in ubiquitin) cross-link involves residue Lys154. Residues 542-562 form a helical membrane-spanning segment; that stretch reads VSNTFTGLILSPLLLLFALWI. At 563–570 the chain is on the cytoplasmic side; the sequence is RIGAKISN. The chain crosses the membrane as a helical span at residues 571 to 591; sequence FTFGLTIIFHLGHAMLAMYVY. The Lumenal segment spans residues 592–594; the sequence is WTQ. The chain crosses the membrane as a helical span at residues 595 to 615; it reads LNMFQTLKYLAILGSVTFLAG. Over 616 to 629 the chain is Cytoplasmic; the sequence is NRMLAQQAIKRTAH.

This sequence belongs to the SWP1 family. As to quaternary structure, component of the oligosaccharyltransferase (OST) complex. OST exists in two different complex forms which contain common core subunits RPN1, RPN2, OST48, OST4, DAD1 and TMEM258, either STT3A or STT3B as catalytic subunits, and form-specific accessory subunits. STT3A complex assembly occurs through the formation of 3 subcomplexes. Subcomplex 1 contains RPN1 and TMEM258, subcomplex 2 contains the STT3A-specific subunits STT3A, DC2/OSTC, and KCP2 as well as the core subunit OST4, and subcomplex 3 contains RPN2, DAD1, and OST48. The STT3A complex can form stable complexes with the Sec61 complex or with both the Sec61 and TRAP complexes. Interacts with DDI2. Interacts with TMEM35A/NACHO.

The protein resides in the endoplasmic reticulum. The protein localises to the endoplasmic reticulum membrane. It participates in protein modification; protein glycosylation. Functionally, subunit of the oligosaccharyl transferase (OST) complex that catalyzes the initial transfer of a defined glycan (Glc(3)Man(9)GlcNAc(2) in eukaryotes) from the lipid carrier dolichol-pyrophosphate to an asparagine residue within an Asn-X-Ser/Thr consensus motif in nascent polypeptide chains, the first step in protein N-glycosylation. N-glycosylation occurs cotranslationally and the complex associates with the Sec61 complex at the channel-forming translocon complex that mediates protein translocation across the endoplasmic reticulum (ER). All subunits are required for a maximal enzyme activity. The chain is Dolichyl-diphosphooligosaccharide--protein glycosyltransferase subunit 2 from Sus scrofa (Pig).